A 406-amino-acid polypeptide reads, in one-letter code: CMP-sialic acid transporter 2 (406 aa).

Topologically, residues 1-41 are cytoplasmic; it reads MKNGMAECSVCRSRLVSPSSKAISRAYDNYNYKIRVSSKQR. The chain crosses the membrane as a helical span at residues 42-62; the sequence is ALNVFLVVGDCMLVGLQPVLV. Residues 63-75 are Lumenal-facing; that stretch reads YMSKVDGKFNFSP. The chain crosses the membrane as a helical span at residues 76 to 96; the sequence is ISVNFLTEIAKVIFAMVMLLF. Over 97–148 the chain is Cytoplasmic; that stretch reads QARHQKVGEKPLLSLSTFVQAARNNMLLAVPAGLYAINNYLKFTMQLYFNPA. The chain crosses the membrane as a helical span at residues 149–169; the sequence is TVKMLSNLKVLVIAVLLKMIM. The Lumenal portion of the chain corresponds to 170-172; it reads KRR. Residues 173-193 form a helical membrane-spanning segment; the sequence is FSIIQWEALALLLIGISINQL. Over 194-201 the chain is Cytoplasmic; sequence RSLPEGAT. The helical transmembrane segment at 202–222 threads the bilayer; that stretch reads TVAVPIATGAYICTFIFVTVP. At 223–245 the chain is on the lumenal side; the sequence is SLASVYNEYALKSQYDTSIYLQN. The chain crosses the membrane as a helical span at residues 246–266; that stretch reads LFLYGYGAIFNFLGILGTVIY. At 267–282 the chain is on the cytoplasmic side; the sequence is KGPGSFDILQGHSRAT. Residues 283–303 traverse the membrane as a helical segment; it reads MFLILNNAAQGILSSFFFKYA. The Lumenal portion of the chain corresponds to 304 to 323; sequence DTILKKYSSTVATIFTGIAS. A helical transmembrane segment spans residues 324–344; sequence AALFGHILTMNFLLGISIVFI. At 345 to 406 the chain is on the cytoplasmic side; sequence SMHQFFSPLS…SDDRVPLLPR (62 aa).

This sequence belongs to the nucleotide-sugar transporter family. CMP-Sialate:CMP antiporter (TC 2.A.7.12) subfamily.

It localises to the golgi apparatus membrane. In terms of biological role, sugar transporter involved in the transport of CMP-sialic acid from the cytoplasm into the Golgi. This chain is CMP-sialic acid transporter 2, found in Arabidopsis thaliana (Mouse-ear cress).